The chain runs to 325 residues: MSVSAQSVPTTIACLLGPTASGKTAAALALAARRPIEIVSVDSALVYRDMDIGTAKPTREERARVPHHLIDIIDPADAYSAASFRADTLRLIGEIVARGNTPLLAGGTMLYYKALTQGLNDLPTADPAVRAELDAEAARDGWPALHARLAQIDPATAARLAPNDAQRIQRALEVFMLSGQPMSALLAAPRPADEAAAAYRFVPVALEPSDRAVLHARIAQRFDAMLAAGFIDEVERLRRRDDLHLGLPSMRCVGYRQAWEFLDGDIDYRTMRDKGIFATRQLCKRQITWLRAMPERIVVDCIAPDSTARALDALERVLDGRIAAG.

Residue glycine 17–threonine 24 coordinates ATP. Threonine 19–threonine 24 provides a ligand contact to substrate. Interaction with substrate tRNA stretches follow at residues aspartate 42–leucine 45, glutamine 166–arginine 170, arginine 251–arginine 256, and lysine 284–arginine 291.

It belongs to the IPP transferase family. As to quaternary structure, monomer. Mg(2+) is required as a cofactor.

It carries out the reaction adenosine(37) in tRNA + dimethylallyl diphosphate = N(6)-dimethylallyladenosine(37) in tRNA + diphosphate. In terms of biological role, catalyzes the transfer of a dimethylallyl group onto the adenine at position 37 in tRNAs that read codons beginning with uridine, leading to the formation of N6-(dimethylallyl)adenosine (i(6)A). This is tRNA dimethylallyltransferase from Burkholderia multivorans (strain ATCC 17616 / 249).